The primary structure comprises 412 residues: Protein MT3510 (412 aa).

Residue Lys-227 is modified to N6-(pyridoxal phosphate)lysine.

Belongs to the DegT/DnrJ/EryC1 family.

This is Protein MT3510 from Mycobacterium tuberculosis (strain CDC 1551 / Oshkosh).